The chain runs to 163 residues: Transcriptional repressor NrdR (163 aa).

Residues 3 to 34 fold into a zinc finger; sequence CVQCGHLEDKVIDSRMSKDGTTIRRRRVCLRC. Residues 49 to 139 enclose the ATP-cone domain; it reads LRVVKRDNLR…VYRQFSNVEE (91 aa).

Belongs to the NrdR family. Zn(2+) is required as a cofactor.

Negatively regulates transcription of bacterial ribonucleotide reductase nrd genes and operons by binding to NrdR-boxes. This chain is Transcriptional repressor NrdR, found in Akkermansia muciniphila (strain ATCC BAA-835 / DSM 22959 / JCM 33894 / BCRC 81048 / CCUG 64013 / CIP 107961 / Muc).